The chain runs to 195 residues: Probable nicotinate-nucleotide adenylyltransferase (195 aa).

It belongs to the NadD family.

It catalyses the reaction nicotinate beta-D-ribonucleotide + ATP + H(+) = deamido-NAD(+) + diphosphate. The protein operates within cofactor biosynthesis; NAD(+) biosynthesis; deamido-NAD(+) from nicotinate D-ribonucleotide: step 1/1. Its function is as follows. Catalyzes the reversible adenylation of nicotinate mononucleotide (NaMN) to nicotinic acid adenine dinucleotide (NaAD). The protein is Probable nicotinate-nucleotide adenylyltransferase of Salinibacter ruber (strain DSM 13855 / M31).